We begin with the raw amino-acid sequence, 122 residues long: Large ribosomal subunit protein uL14 (122 aa).

It belongs to the universal ribosomal protein uL14 family. Part of the 50S ribosomal subunit. Forms a cluster with proteins L3 and L19. In the 70S ribosome, L14 and L19 interact and together make contacts with the 16S rRNA in bridges B5 and B8.

In terms of biological role, binds to 23S rRNA. Forms part of two intersubunit bridges in the 70S ribosome. In Paraburkholderia phytofirmans (strain DSM 17436 / LMG 22146 / PsJN) (Burkholderia phytofirmans), this protein is Large ribosomal subunit protein uL14.